Here is an 830-residue protein sequence, read N- to C-terminus: Leucine--tRNA ligase (830 aa).

Residues 34-44 carry the 'HIGH' region motif; it reads PYPSGNIHMGH. Residues 592–596 carry the 'KMSKS' region motif; sequence KMSKS. K595 is a binding site for ATP.

Belongs to the class-I aminoacyl-tRNA synthetase family.

Its subcellular location is the cytoplasm. It carries out the reaction tRNA(Leu) + L-leucine + ATP = L-leucyl-tRNA(Leu) + AMP + diphosphate. In Ehrlichia ruminantium (strain Welgevonden), this protein is Leucine--tRNA ligase.